We begin with the raw amino-acid sequence, 336 residues long: Fructose-1,6-bisphosphatase class 1 (336 aa).

The Mg(2+) site is built by Glu90, Asp112, Leu114, and Asp115. Residues 115-118 (DGSS), Asn211, and Lys277 contribute to the substrate site. Residue Glu283 participates in Mg(2+) binding.

Belongs to the FBPase class 1 family. Homotetramer. Mg(2+) is required as a cofactor.

It is found in the cytoplasm. It carries out the reaction beta-D-fructose 1,6-bisphosphate + H2O = beta-D-fructose 6-phosphate + phosphate. It functions in the pathway carbohydrate biosynthesis; gluconeogenesis. This is Fructose-1,6-bisphosphatase class 1 from Pseudomonas fluorescens (strain ATCC BAA-477 / NRRL B-23932 / Pf-5).